The chain runs to 248 residues: 3-deoxy-manno-octulosonate cytidylyltransferase (248 aa).

This sequence belongs to the KdsB family.

Its subcellular location is the cytoplasm. It carries out the reaction 3-deoxy-alpha-D-manno-oct-2-ulosonate + CTP = CMP-3-deoxy-beta-D-manno-octulosonate + diphosphate. The protein operates within nucleotide-sugar biosynthesis; CMP-3-deoxy-D-manno-octulosonate biosynthesis; CMP-3-deoxy-D-manno-octulosonate from 3-deoxy-D-manno-octulosonate and CTP: step 1/1. It participates in bacterial outer membrane biogenesis; lipopolysaccharide biosynthesis. Its function is as follows. Activates KDO (a required 8-carbon sugar) for incorporation into bacterial lipopolysaccharide in Gram-negative bacteria. The polypeptide is 3-deoxy-manno-octulosonate cytidylyltransferase (Chlorobium chlorochromatii (strain CaD3)).